A 311-amino-acid chain; its full sequence is Inositol oxygenase 1 (311 aa).

Residues 1 to 11 (MTILIDRHSDQ) are compositionally biased toward basic and acidic residues. The interval 1–29 (MTILIDRHSDQNDAGDEIVEKNQGNGKEE) is disordered. Residues Arg-52 and 109–111 (DES) contribute to the substrate site. 3 residues coordinate Fe cation: His-122, His-147, and Asp-148. Residues Lys-151 and 168–169 (GD) contribute to the substrate site. Residues His-220, His-246, and Asp-279 each contribute to the Fe cation site. 246–247 (HS) provides a ligand contact to substrate.

Belongs to the myo-inositol oxygenase family. Requires Fe cation as cofactor. Expressed in roots, young leaves, stems, flowers and siliques.

Its subcellular location is the cytoplasm. The enzyme catalyses myo-inositol + O2 = D-glucuronate + H2O + H(+). It functions in the pathway polyol metabolism; myo-inositol degradation into D-glucuronate; D-glucuronate from myo-inositol: step 1/1. Catalyzes the oxygenative cleavage of myo-inositol to D-glucuronate. Involved in the biosynthesis of UDP-glucuronic acid (UDP-GlcA), providing nucleotide sugars for cell-wall polymers. May be also involved in plant ascorbate biosynthesis. This is Inositol oxygenase 1 (MIOX1) from Arabidopsis thaliana (Mouse-ear cress).